A 468-amino-acid chain; its full sequence is MSSETLYDKIWDLHRVAEIPGGSTQLFVGLHLIHEVTSPQAFSALNEKGLSVHCPERTIATVDHIVPTTSQNRPFPDSLAEQMLRTLELNCLKHSIKFFKIGSGNQGIVHVIAPETGLTQPGMTIACGDSHTSTHGAFGSIAFGIGTSQVRDVLASQTLAMKKLKVKRIWFDGYLQKGVFAKDLILHVIQKLGVKDGVGYAYEFAGPAIDGLSMEERMTICNMAIEGGARCGYINPDKTTFNYLKGRPYSPKGKEWEKAILWWESLASSKSAIYDDEVRFNASLIAPTVTWGITPGQSIAIDASIPTPESLDKNDQQIALEAYKYMDLKPGSSIEGIPIDVCFIGSCTNGRLSDLEKAAEIAKNRQVAKGVKAFVVPGSEKVAQDAESQGLDTIFEKAGFEWRKPGCSMCLAMNPDKLERNQISASSSNRNFKGRQGSAQGRTLLMSPAMVAAAAVTGSITDVRKLLH.

[4Fe-4S] cluster is bound by residues cysteine 347, cysteine 407, and cysteine 410.

This sequence belongs to the aconitase/IPM isomerase family. LeuC type 1 subfamily. Heterodimer of LeuC and LeuD. It depends on [4Fe-4S] cluster as a cofactor.

It catalyses the reaction (2R,3S)-3-isopropylmalate = (2S)-2-isopropylmalate. It functions in the pathway amino-acid biosynthesis; L-leucine biosynthesis; L-leucine from 3-methyl-2-oxobutanoate: step 2/4. In terms of biological role, catalyzes the isomerization between 2-isopropylmalate and 3-isopropylmalate, via the formation of 2-isopropylmaleate. This Prochlorococcus marinus (strain SARG / CCMP1375 / SS120) protein is 3-isopropylmalate dehydratase large subunit.